A 308-amino-acid polypeptide reads, in one-letter code: Methionyl-tRNA formyltransferase (308 aa).

109–112 provides a ligand contact to (6S)-5,6,7,8-tetrahydrofolate; that stretch reads SLLP.

This sequence belongs to the Fmt family.

It catalyses the reaction L-methionyl-tRNA(fMet) + (6R)-10-formyltetrahydrofolate = N-formyl-L-methionyl-tRNA(fMet) + (6S)-5,6,7,8-tetrahydrofolate + H(+). In terms of biological role, attaches a formyl group to the free amino group of methionyl-tRNA(fMet). The formyl group appears to play a dual role in the initiator identity of N-formylmethionyl-tRNA by promoting its recognition by IF2 and preventing the misappropriation of this tRNA by the elongation apparatus. The protein is Methionyl-tRNA formyltransferase of Clostridium beijerinckii (strain ATCC 51743 / NCIMB 8052) (Clostridium acetobutylicum).